The primary structure comprises 590 residues: Proline--tRNA ligase (590 aa).

Belongs to the class-II aminoacyl-tRNA synthetase family. ProS type 1 subfamily. In terms of assembly, homodimer.

It is found in the cytoplasm. The catalysed reaction is tRNA(Pro) + L-proline + ATP = L-prolyl-tRNA(Pro) + AMP + diphosphate. Functionally, catalyzes the attachment of proline to tRNA(Pro) in a two-step reaction: proline is first activated by ATP to form Pro-AMP and then transferred to the acceptor end of tRNA(Pro). As ProRS can inadvertently accommodate and process non-cognate amino acids such as alanine and cysteine, to avoid such errors it has two additional distinct editing activities against alanine. One activity is designated as 'pretransfer' editing and involves the tRNA(Pro)-independent hydrolysis of activated Ala-AMP. The other activity is designated 'posttransfer' editing and involves deacylation of mischarged Ala-tRNA(Pro). The misacylated Cys-tRNA(Pro) is not edited by ProRS. This is Proline--tRNA ligase from Leifsonia xyli subsp. xyli (strain CTCB07).